A 302-amino-acid chain; its full sequence is Recombination-associated protein RdgC (302 aa).

It belongs to the RdgC family.

It is found in the cytoplasm. The protein localises to the nucleoid. May be involved in recombination. This Xylella fastidiosa (strain 9a5c) protein is Recombination-associated protein RdgC.